Reading from the N-terminus, the 851-residue chain is Venom phosphodiesterase 1 (851 aa).

Positions 1-23 are cleaved as a signal peptide; it reads MIQQKVLFISLVAVTLGLGLGLG. 2 consecutive SMB domains span residues 30-73 and 74-118; these read PQVS…VLPT and QSWS…GETS. 16 disulfide bridges follow: C34/C38, C34/C51, C38/C69, C49/C51, C49/C62, C55/C61, C62/C69, C78/C83, C78/C95, C83/C113, C93/C95, C93/C106, C99/C105, C106/C113, C124/C170, and C132/C344. N39 carries N-linked (GlcNAc...) asparagine glycosylation. A Cell attachment site motif is present at residues 58-60; it reads RQA. The a divalent metal cation site is built by D147 and T185. T185 serves as the catalytic AMP-threonine intermediate. N-linked (GlcNAc...) asparagine glycosylation is found at N216, N259, and N270. K271 is a binding site for AMP. D305, H309, D352, and H353 together coordinate a divalent metal cation. Residue H309 participates in AMP binding. 6 disulfide bridges follow: C360–C457, C408–C793, C541–C599, C554–C654, C556–C639, and C762–C772. N405 carries an N-linked (GlcNAc...) asparagine glycan. H462 contributes to the a divalent metal cation binding site. 4 N-linked (GlcNAc...) asparagine glycosylation sites follow: N512, N594, N674, and N745.

Belongs to the nucleotide pyrophosphatase/phosphodiesterase family. In terms of assembly, monomer cleaved in two subunits; disulfide-linked. Is synthesized as a single-chain protein and is subsequently cleaved to form a two-subunit protein held together with disulfide bonds. Requires a divalent metal cation as cofactor. As to expression, expressed by venom gland.

It is found in the secreted. The enzyme catalyses ADP + H2O = AMP + phosphate + H(+). Functionally, hydrolyzes ADP with high activity. Shows weak or no activity on 5'-AMP, 5'-GMP, 3'-AMP, ATP, cAMP, and cGMP. Is devoid of monophosphatase and proteinase activities. Dose-dependently inhibits platelet aggregation induced by ADP and collagen. The sequence is that of Venom phosphodiesterase 1 from Crotalus adamanteus (Eastern diamondback rattlesnake).